The following is a 481-amino-acid chain: ATP synthase subunit beta, chloroplastic (481 aa).

Residue 161–168 (GGAGVGKT) participates in ATP binding.

The protein belongs to the ATPase alpha/beta chains family. In terms of assembly, F-type ATPases have 2 components, CF(1) - the catalytic core - and CF(0) - the membrane proton channel. CF(1) has five subunits: alpha(3), beta(3), gamma(1), delta(1), epsilon(1). CF(0) has four main subunits: a(1), b(1), b'(1) and c(9-12).

It localises to the plastid. The protein localises to the chloroplast thylakoid membrane. It carries out the reaction ATP + H2O + 4 H(+)(in) = ADP + phosphate + 5 H(+)(out). Its function is as follows. Produces ATP from ADP in the presence of a proton gradient across the membrane. The catalytic sites are hosted primarily by the beta subunits. The sequence is that of ATP synthase subunit beta, chloroplastic from Mesostigma viride (Green alga).